The sequence spans 89 residues: Small ribosomal subunit protein bS18 (89 aa).

This sequence belongs to the bacterial ribosomal protein bS18 family. As to quaternary structure, part of the 30S ribosomal subunit. Forms a tight heterodimer with protein bS6.

Functionally, binds as a heterodimer with protein bS6 to the central domain of the 16S rRNA, where it helps stabilize the platform of the 30S subunit. This chain is Small ribosomal subunit protein bS18, found in Phocaeicola vulgatus (strain ATCC 8482 / DSM 1447 / JCM 5826 / CCUG 4940 / NBRC 14291 / NCTC 11154) (Bacteroides vulgatus).